A 138-amino-acid polypeptide reads, in one-letter code: Large ribosomal subunit protein uL16 (138 aa).

A compositionally biased stretch (basic residues) spans 1 to 13 (MLQPARRKFRKEQ). The tract at residues 1–22 (MLQPARRKFRKEQKGRNTGLAT) is disordered.

It belongs to the universal ribosomal protein uL16 family. Part of the 50S ribosomal subunit.

Binds 23S rRNA and is also seen to make contacts with the A and possibly P site tRNAs. The protein is Large ribosomal subunit protein uL16 of Thiobacillus denitrificans (strain ATCC 25259 / T1).